Here is a 449-residue protein sequence, read N- to C-terminus: Tubulin alpha chain (449 aa).

Residues 1-4 (MREC) carry the MREC motif motif. Residue Gln-11 coordinates GTP. Lys-40 is subject to N6-acetyllysine. The GTP site is built by Glu-71, Ser-140, Gly-144, Thr-145, Thr-179, Asn-206, and Asn-228. Glu-71 serves as a coordination point for Mg(2+). Residue Glu-254 is part of the active site. The tract at residues 430-449 (KDYEEVGADSADAEDEGEEY) is disordered. The span at 431–449 (DYEEVGADSADAEDEGEEY) shows a compositional bias: acidic residues.

It belongs to the tubulin family. In terms of assembly, dimer of alpha and beta chains. A typical microtubule is a hollow water-filled tube with an outer diameter of 25 nm and an inner diameter of 15 nM. Alpha-beta heterodimers associate head-to-tail to form protofilaments running lengthwise along the microtubule wall with the beta-tubulin subunit facing the microtubule plus end conferring a structural polarity. Microtubules usually have 13 protofilaments but different protofilament numbers can be found in some organisms and specialized cells. Mg(2+) serves as cofactor. Some glutamate residues at the C-terminus are polyglycylated, resulting in polyglycine chains on the gamma-carboxyl group. Glycylation is mainly limited to tubulin incorporated into axonemes (cilia and flagella) whereas glutamylation is prevalent in neuronal cells, centrioles, axonemes, and the mitotic spindle. Both modifications can coexist on the same protein on adjacent residues, and lowering polyglycylation levels increases polyglutamylation, and reciprocally. The precise function of polyglycylation is still unclear. Post-translationally, some glutamate residues at the C-terminus are polyglutamylated, resulting in polyglutamate chains on the gamma-carboxyl group. Polyglutamylation plays a key role in microtubule severing by spastin (SPAST). SPAST preferentially recognizes and acts on microtubules decorated with short polyglutamate tails: severing activity by SPAST increases as the number of glutamates per tubulin rises from one to eight, but decreases beyond this glutamylation threshold. In terms of processing, acetylation of alpha chains at Lys-40 is located inside the microtubule lumen. This modification has been correlated with increased microtubule stability, intracellular transport and ciliary assembly. Undergoes a tyrosination/detyrosination cycle, the cyclic removal and re-addition of a C-terminal tyrosine residue by the enzymes tubulin tyrosine carboxypeptidase (MATCAP1, VASH1 or VASH2) and tubulin tyrosine ligase (TTL), respectively. Post-translationally, tyrosination promotes microtubule interaction with CAP-Gly microtubule plus-end tracking proteins. Tyrosinated tubulins regulate the initiation of dynein-driven motility. In terms of processing, detyrosination is involved in metaphase plate congression by guiding chromosomes during mitosis. Detyrosination increases microtubules-dependent mechanotransduction in dystrophic cardiac and skeletal muscle. In cardiomyocytes, detyrosinated microtubules are required to resist to contractile compression during contraction.

The protein localises to the cytoplasm. It localises to the cytoskeleton. The enzyme catalyses GTP + H2O = GDP + phosphate + H(+). Its function is as follows. Tubulin is the major constituent of microtubules, a cylinder consisting of laterally associated linear protofilaments composed of alpha- and beta-tubulin heterodimers. Microtubules grow by the addition of GTP-tubulin dimers to the microtubule end, where a stabilizing cap forms. Below the cap, tubulin dimers are in GDP-bound state, owing to GTPase activity of alpha-tubulin. The sequence is that of Tubulin alpha chain (tuba) from Xenopus laevis (African clawed frog).